A 127-amino-acid chain; its full sequence is NHP2-like protein 1 homolog (127 aa).

It belongs to the eukaryotic ribosomal protein eL8 family.

The protein localises to the nucleus. It is found in the nucleolus. Binds to the 5'-stem-loop of U4 snRNA and may play a role in the late stage of spliceosome assembly. The protein undergoes a conformational change upon RNA-binding. The sequence is that of NHP2-like protein 1 homolog (hoip) from Drosophila melanogaster (Fruit fly).